The following is a 216-amino-acid chain: Transmembrane protein 186 (216 aa).

Over 1 to 68 (MAFLLRVVPR…IYRFRAIRAI (68 aa)) the chain is Mitochondrial matrix. The segment at 31-52 (GDSKRWVGSRSPHSREKSPGTE) is disordered. Residues 69 to 91 (GFLSRLKLAQTAVTVVALPPGFY) traverse the membrane as a helical segment. Over 92–103 (CYSQGLMTLSSL) the chain is Mitochondrial intermembrane. A helical transmembrane segment spans residues 104–124 (CLLGGVASFALAMLCWMSHFF). The Mitochondrial matrix segment spans residues 125-216 (RRLVGILYVN…GTLATLKNSK (92 aa)).

This sequence belongs to the TMEM186 family. In terms of assembly, part of the mitochondrial complex I assembly/MCIA complex that comprises at least the core subunits TMEM126B, NDUFAF1, ECSIT and ACAD9 and complement subunits such as COA1 and TMEM186. Interacts with MT-ND3.

It is found in the mitochondrion inner membrane. Its function is as follows. As part of the MCIA complex, required for efficient assembly of the mitochondrial complex I. The sequence is that of Transmembrane protein 186 from Mus musculus (Mouse).